Reading from the N-terminus, the 123-residue chain is cAMP-responsive element-binding protein-like 2 (123 aa).

Residues 1–24 (MDDSKVVGGKVKKPGKRGRKPAKI) are disordered. The segment covering 10-21 (KVKKPGKRGRKP) has biased composition (basic residues). The region spanning 23-86 (KIDLKAKLER…MAMDQGKIPS (64 aa)) is the bZIP domain. The interval 29–60 (KLERSRQSARECRARKKLRYQYLEELVSSRER) is basic motif. The tract at residues 62-69 (ICALREEL) is leucine-zipper. The disordered stretch occupies residues 93–123 (TGEEQNKSQQNSSRHPKAGKTDANTNSLVGN). The segment covering 114 to 123 (DANTNSLVGN) has biased composition (polar residues).

Belongs to the bZIP family. ATF subfamily. Interacts with CREB1; regulates CREB1 phosphorylation, stability and transcriptional activity. In terms of processing, phosphorylated by AMPK.

It is found in the nucleus. In terms of biological role, probable regulator of CREB1 transcriptional activity which is involved in adipose cells differentiation. May also play a regulatory role in the cell cycle. The chain is cAMP-responsive element-binding protein-like 2 (Crebl2) from Rattus norvegicus (Rat).